The primary structure comprises 416 residues: 3-isopropylmalate dehydratase large subunit (416 aa).

The [4Fe-4S] cluster site is built by cysteine 299, cysteine 357, and cysteine 360.

Belongs to the aconitase/IPM isomerase family. LeuC type 2 subfamily. As to quaternary structure, heterodimer of LeuC and LeuD. [4Fe-4S] cluster is required as a cofactor.

It catalyses the reaction (2R,3S)-3-isopropylmalate = (2S)-2-isopropylmalate. Its pathway is amino-acid biosynthesis; L-leucine biosynthesis; L-leucine from 3-methyl-2-oxobutanoate: step 2/4. Catalyzes the isomerization between 2-isopropylmalate and 3-isopropylmalate, via the formation of 2-isopropylmaleate. This Saccharolobus solfataricus (strain ATCC 35092 / DSM 1617 / JCM 11322 / P2) (Sulfolobus solfataricus) protein is 3-isopropylmalate dehydratase large subunit.